Consider the following 417-residue polypeptide: Acetate kinase (417 aa).

Asparagine 7 is a Mg(2+) binding site. Lysine 14 is a binding site for ATP. Residue arginine 104 coordinates substrate. The Proton donor/acceptor role is filled by aspartate 162. Residues 222–226 (HLGNG), 297–299 (DMR), and 346–350 (GIGEN) contribute to the ATP site. A Mg(2+)-binding site is contributed by glutamate 401.

The protein belongs to the acetokinase family. Homodimer. The cofactor is Mg(2+). Requires Mn(2+) as cofactor.

The protein localises to the cytoplasm. It catalyses the reaction acetate + ATP = acetyl phosphate + ADP. It participates in metabolic intermediate biosynthesis; acetyl-CoA biosynthesis; acetyl-CoA from acetate: step 1/2. Its function is as follows. Catalyzes the formation of acetyl phosphate from acetate and ATP. Can also catalyze the reverse reaction. The chain is Acetate kinase from Chloroherpeton thalassium (strain ATCC 35110 / GB-78).